We begin with the raw amino-acid sequence, 301 residues long: Homoserine O-acetyltransferase (301 aa).

Cys142 (acyl-thioester intermediate) is an active-site residue. Residues Lys163 and Ser192 each coordinate substrate. His235 functions as the Proton acceptor in the catalytic mechanism. Residue Glu237 is part of the active site. Arg249 is a substrate binding site.

Belongs to the MetA family. As to quaternary structure, homodimer.

It is found in the cytoplasm. The catalysed reaction is L-homoserine + acetyl-CoA = O-acetyl-L-homoserine + CoA. Its pathway is amino-acid biosynthesis; L-methionine biosynthesis via de novo pathway; O-acetyl-L-homoserine from L-homoserine: step 1/1. In terms of biological role, transfers an acetyl group from acetyl-CoA to L-homoserine, forming acetyl-L-homoserine. Utilizes a ping-pong kinetic mechanism in which the acetyl group of acetyl-CoA is initially transferred to the enzyme to form an acetyl-enzyme intermediate before subsequent transfer to homoserine to form the final product, O-acetylhomoserine. Cannot use succinyl-CoA as the acyl donor. This chain is Homoserine O-acetyltransferase, found in Bacillus cereus (strain ATCC 10987 / NRS 248).